The primary structure comprises 1083 residues: MKVFDLLGPLPAPNTTTVLEASAGTGKTFALAGLVTRFVAEGVATLDQMLLITFGRAASQELRERVRAQIVAALVALDDPSRACNDLEEYLVKTDQQARRRRLRDALAGFDAATIATTHQFCQIVLKSLGVAGDSDAGVTLVESLDDLVSEIVDDLYLAHFGGQKDDPELSYPEALKLARVVVGNPATQLRPRDPDPDSPAAVRLKFARDVLAELEIRKRRRGVLGYDDLLTRLADALEPEDSPARVRMQQRWPIVMVDEFQDTDPVQWQVIERAFSGRSTLVLIGDPKQAIYAFRGGDIATYLRAAATAGDKQTLGTNWRSDRALVDRLQAVLRGAQLGGPDIVVHDVQARHQGHRLVGAPRNDPFRLRVVSRKPGNTRVIPIDQLRRHIGRDLAADISALLNSGATWCDQPVQAKDIAVITETHKDARACHAALLAAGIPAVYTGDSDVFTSEAAEDWLYLLEAFDQPHRPGLVRAAAATMFFGETAESLAAGGDALTDRVADTLREWAGHARERGVAAIFEAAQLAGMGKRVLSWQGGERLMTDLAHMTQLLQDTAHREGFGLAALRDWLRTQRSERGGESERNRRLDSDAAAVQIMTVWVSKGLQFPVVYLPFAFNRYVPEPDLVLFHDDGQRCLHVGGADPAVARAGRAEAAGDDSRLTYVALTRAQSQVVAWWAPSYDEPNGGLSRLMRGRAPGEAIVPDKCSPPKISDEDALERLRAWEAAGGPVIEESVIGAVSPVPPEPAPEDLAARKFFRAIDMAWKRTSYSGLLRAAETAGVGVSSEPEVTERDDEFDDIPVVAPAEGADVPSPMAHLPTGAAFGSLVHAVLETADPFAEDLTAELATHIDAHSQHWPVEVETAELAAALVPMHDTPLGPLAPGLTLRQIGLRDRLCELDFEFPMAGGDLRGGRFARLSDVGELLREYLPADDPLAVYAERLSTGILGVQPLRGYLSGSVDAVLRVGEKFVIVDYKTNWLGTGDGTLTAADYGRRRMVEAMLHSDYPLQALLYAVVLHRYLGWRLSGYDPATHLGGVLYLFVRGMCGAGTPVVDGHPAGVFSWEPPADLVVALSKLLDAEAP.

The region spanning 1–323 (MKVFDLLGPL…QTLGTNWRSD (323 aa)) is the UvrD-like helicase ATP-binding domain. A DNA-binding and helicase activity, interacts with RecC region spans residues 1–704 (MKVFDLLGPL…RGRAPGEAIV (704 aa)). An ATP-binding site is contributed by 21–28 (ASAGTGKT). Residues 349–607 (VQARHQGHRL…QIMTVWVSKG (259 aa)) form the UvrD-like helicase C-terminal domain. The segment at 765-1083 (AWKRTSYSGL…LSKLLDAEAP (319 aa)) is nuclease activity, interacts with RecD and RecA. Mg(2+) contacts are provided by H830, D962, and D975. The active-site For nuclease activity is the D975.

It belongs to the helicase family. UvrD subfamily. As to quaternary structure, heterotrimer of RecB, RecC and RecD. All subunits contribute to DNA-binding. Interacts with RecA. Mg(2+) serves as cofactor.

The enzyme catalyses Exonucleolytic cleavage (in the presence of ATP) in either 5'- to 3'- or 3'- to 5'-direction to yield 5'-phosphooligonucleotides.. It carries out the reaction Couples ATP hydrolysis with the unwinding of duplex DNA by translocating in the 3'-5' direction.. It catalyses the reaction ATP + H2O = ADP + phosphate + H(+). A helicase/nuclease that prepares dsDNA breaks (DSB) for recombinational DNA repair. Binds to DSBs and unwinds DNA via a highly rapid and processive ATP-dependent bidirectional helicase activity. Holoenzyme degrades any linearized DNA that is unable to undergo homologous recombination. In the holoenzyme this subunit contributes DNA-dependent ATPase activity, exonuclease activity and 3'-5' helicase activity. Unlike the case in E.coli, suppresses RecA-dependent homologous recombination, is instead required for single-strand annealing pathway repair of DSB. The chain is RecBCD enzyme subunit RecB from Mycolicibacterium smegmatis (strain ATCC 700084 / mc(2)155) (Mycobacterium smegmatis).